A 105-amino-acid chain; its full sequence is Mitomycin resistance protein McrB (105 aa).

In terms of biological role, involved in mitomycin resistance. May operate with McrA or may be a type of transcriptional activator protein. The chain is Mitomycin resistance protein McrB (mcrB) from Streptomyces lavendulae.